Here is a 464-residue protein sequence, read N- to C-terminus: Non-structural protein NS-S (464 aa).

Belongs to the tospovirus NS-S protein family. As to quaternary structure, interacts with host MYC2.

Multifunctional protein that plays two independent roles: viral suppressor of host RNAi (VSR) and viral inducer of host attractiveness to insect vectors (VIA). Acts as a suppressor of RNA-mediated gene silencing, also known as post-transcriptional gene silencing (PTGS), a mechanism of plant viral defense that limits the accumulation of viral RNAs. Also inhibits signal transduction by the phytohormone jasmonate, making the infected plant more attractive to aphids, which are the second host to play a role as a dissemination vector. Acts by binding to and inhibiting MYC2 transcription factor. In Frankliniella occidentalis (Western flower thrips), this protein is Non-structural protein NS-S (NSS).